Here is a 382-residue protein sequence, read N- to C-terminus: Anhydro-N-acetylmuramic acid kinase (382 aa).

9 to 16 (GTSLDGID) contacts ATP.

This sequence belongs to the anhydro-N-acetylmuramic acid kinase family.

It catalyses the reaction 1,6-anhydro-N-acetyl-beta-muramate + ATP + H2O = N-acetyl-D-muramate 6-phosphate + ADP + H(+). It functions in the pathway amino-sugar metabolism; 1,6-anhydro-N-acetylmuramate degradation. Its pathway is cell wall biogenesis; peptidoglycan recycling. In terms of biological role, catalyzes the specific phosphorylation of 1,6-anhydro-N-acetylmuramic acid (anhMurNAc) with the simultaneous cleavage of the 1,6-anhydro ring, generating MurNAc-6-P. Is required for the utilization of anhMurNAc either imported from the medium or derived from its own cell wall murein, and thus plays a role in cell wall recycling. This chain is Anhydro-N-acetylmuramic acid kinase, found in Bacillus anthracis (strain A0248).